Here is a 31-residue protein sequence, read N- to C-terminus: Large ribosomal subunit protein bL21 (31 aa).

This sequence belongs to the bacterial ribosomal protein bL21 family. In terms of assembly, part of the 50S ribosomal subunit. Contacts protein L20.

Its function is as follows. This protein binds to 23S rRNA in the presence of protein L20. The polypeptide is Large ribosomal subunit protein bL21 (rplU) (Streptococcus thermophilus).